The sequence spans 983 residues: Alanine--tRNA ligase, mitochondrial (983 aa).

The N-terminal 24 residues, 1–24 (MTSTTGLRNLTLSFKKQLTTSTRT), are a transit peptide targeting the mitochondrion. Position 504 is a phosphoserine (Ser-504). Zn(2+)-binding residues include His-625, His-629, Cys-744, and His-748. A Phosphoserine modification is found at Ser-975.

Belongs to the class-II aminoacyl-tRNA synthetase family. In terms of assembly, monomer. The cofactor is Zn(2+).

The protein localises to the cytoplasm. Its subcellular location is the mitochondrion. The enzyme catalyses tRNA(Ala) + L-alanine + ATP = L-alanyl-tRNA(Ala) + AMP + diphosphate. In terms of biological role, catalyzes the attachment of alanine to tRNA(Ala) in a two-step reaction: alanine is first activated by ATP to form Ala-AMP and then transferred to the acceptor end of tRNA(Ala). Also edits incorrectly charged tRNA(Ala) via its editing domain. In Saccharomyces cerevisiae (strain ATCC 204508 / S288c) (Baker's yeast), this protein is Alanine--tRNA ligase, mitochondrial.